The following is an 800-amino-acid chain: MSRRRAHDTEDESYDHRRNKRRRVSENQEIEDRLESLILRVGERSTSSVESNLEGLVSVLEADLGTFRLKILRILSDCAVRMPEKCTVYTTLVGLLNAKNYKFGGEFVDHMVKTFKESLKMCRWDAARYSLRFLADLVNCHVISATSLLQLLDTMIDVSNEDTVPQVRRDWFVFAVLSTLPWVGRDLYEKKESALESLLLRIEVYLNKRSKKHHNALRVWSSDAPHPQEEYLDCLWAQIRKLRQDNWAEKHIPRPYLVFDSILCEALQHNLPAIVPPPHHDNFEYPMPWVVYRMFDYTDCPDGPNLPGAHSIERFLIEEHLHHIIETYHHERKDCAAQLLSFPFKHKIPLEYCIVEVIFAELFHMPTPRYLDICYGSILIELCKLQPATLPQVLAQATEILFMRIDSMNTSCFDRFVNWFSYHLSNFKFTWSWDEWDSCLLLDGEHPRPKFIQEVLQKCLRLSYHQRITEMMPTTYAKLIPLTPVPNYKYANEEAANLPGTAVAHQLVVAIRQKCTPEEVVTILKDIPSSGYSGEEMSDGSFNALKIDVFVQTLLNLGSKSFSHSFAAISKFHSVFRALAETEEAQICILHNIYELWSSHQQMMVVLIDKLLKLQIVDCSAVATWIFSKEMTGEFTKMYLWEILHLTIKKMNKHVIKLNSELSEAKDKLAKADSSSSDSEDDSSHKRKKPITHADKPSEEVVERMEEKLEAANVNQKRLFLIVFQRFIMILSEHLLRSDTDGRDPDTDWYRWTIGRLQQVFLMHHEQVQKYSSTLETLLFTSDLDTHILEVFQQFVALRA.

Residues 1-26 form a disordered region; the sequence is MSRRRAHDTEDESYDHRRNKRRRVSE. A Phosphothreonine modification is found at Thr9. Positions 31-243 constitute an MIF4G domain; the sequence is EDRLESLILR…CLWAQIRKLR (213 aa). The tract at residues 669–700 is disordered; the sequence is LAKADSSSSDSEDDSSHKRKKPITHADKPSEE.

The protein belongs to the NCBP1 family. Component of the nuclear cap-binding complex (CBC), a heterodimer composed of Cbp80 and Cbp20 that interacts with m7GpppG-capped RNA.

It localises to the nucleus. Functionally, component of the cap-binding complex (CBC), which binds cotranscriptionally to the 5'-cap of pre-mRNAs and is involved in various processes such as pre-mRNA splicing and RNA-mediated gene silencing (RNAi). The CBC complex is involved in miRNA-mediated RNA interference via its interaction with Ars2 and is required for primary microRNAs (miRNAs) processing. Also involved in innate immunity via the short interfering RNAs (siRNAs) processing machinery by restricting the viral RNA production. In the CBC complex, Cbp80 does not bind directly capped RNAs (m7GpppG-capped RNA) but is required to stabilize the movement of the N-terminal loop of Cbp20 and lock the CBC into a high affinity cap-binding state with the cap structure. In Drosophila erecta (Fruit fly), this protein is Nuclear cap-binding protein subunit 1 (Cbp80).